A 175-amino-acid polypeptide reads, in one-letter code: ATP synthase subunit b (175 aa).

Residues leucine 20–tryptophan 40 traverse the membrane as a helical segment.

This sequence belongs to the ATPase B chain family. F-type ATPases have 2 components, F(1) - the catalytic core - and F(0) - the membrane proton channel. F(1) has five subunits: alpha(3), beta(3), gamma(1), delta(1), epsilon(1). F(0) has four main subunits: a(1), b(2) and c(10-14). The alpha and beta chains form an alternating ring which encloses part of the gamma chain. F(1) is attached to F(0) by a central stalk formed by the gamma and epsilon chains, while a peripheral stalk is formed by the delta and b chains.

The protein localises to the cell inner membrane. F(1)F(0) ATP synthase produces ATP from ADP in the presence of a proton or sodium gradient. F-type ATPases consist of two structural domains, F(1) containing the extramembraneous catalytic core and F(0) containing the membrane proton channel, linked together by a central stalk and a peripheral stalk. During catalysis, ATP synthesis in the catalytic domain of F(1) is coupled via a rotary mechanism of the central stalk subunits to proton translocation. Its function is as follows. Component of the F(0) channel, it forms part of the peripheral stalk, linking F(1) to F(0). The chain is ATP synthase subunit b from Pelodictyon phaeoclathratiforme (strain DSM 5477 / BU-1).